We begin with the raw amino-acid sequence, 111 residues long: UPF0060 membrane protein Krad_3114 (111 aa).

The next 4 helical transmembrane spans lie at 7–27, 33–53, 62–82, and 88–108; these read IALF…VWQG, GLAW…AATL, VLAA…AVVD, and RFDV…MYAP.

Belongs to the UPF0060 family.

It localises to the cell membrane. This is UPF0060 membrane protein Krad_3114 from Kineococcus radiotolerans (strain ATCC BAA-149 / DSM 14245 / SRS30216).